The following is a 210-amino-acid chain: HTH-type transcriptional repressor FabR (210 aa).

The HTH tetR-type domain occupies 10 to 70; it reads KTRRSLVEAA…TMVDESGLML (61 aa). The H-T-H motif DNA-binding region spans 33-52; it reads SLREVAREAGIAPTSFYRHF.

As to quaternary structure, homodimer.

It localises to the cytoplasm. Represses the transcription of fabB, involved in unsaturated fatty acid (UFA) biosynthesis. By controlling UFA production, FabR directly influences the physical properties of the membrane bilayer. The chain is HTH-type transcriptional repressor FabR from Salmonella paratyphi A (strain ATCC 9150 / SARB42).